The primary structure comprises 429 residues: Type II methyltransferase M.AgeI (429 aa).

Positions 1-429 constitute an SAM-dependent MTase C5-type domain; that stretch reads MKTIDLFCGA…MAETIKVAIS (429 aa). Residue Cys-80 is part of the active site.

Belongs to the class I-like SAM-binding methyltransferase superfamily. C5-methyltransferase family.

It catalyses the reaction a 2'-deoxycytidine in DNA + S-adenosyl-L-methionine = a 5-methyl-2'-deoxycytidine in DNA + S-adenosyl-L-homocysteine + H(+). In terms of biological role, a methylase, recognizes the double-stranded sequence 5'-ACCGGT-3', methylates C-3 on both strands, and protects the DNA from cleavage by the AgeI endonuclease. The chain is Type II methyltransferase M.AgeI (ageIM) from Thalassovita gelatinovora (Thalassobius gelatinovorus).